The primary structure comprises 247 residues: Uridylate kinase (247 aa).

17–20 (KFSG) serves as a coordination point for ATP. UMP is bound at residue G59. Residues G60 and R64 each contribute to the ATP site. Residues D79 and 140-147 (TGNPFFTT) contribute to the UMP site. Residues T167, Y173, and D176 each contribute to the ATP site.

The protein belongs to the UMP kinase family. Homohexamer.

It is found in the cytoplasm. It carries out the reaction UMP + ATP = UDP + ADP. Its pathway is pyrimidine metabolism; CTP biosynthesis via de novo pathway; UDP from UMP (UMPK route): step 1/1. Inhibited by UTP. Functionally, catalyzes the reversible phosphorylation of UMP to UDP. The polypeptide is Uridylate kinase (Legionella pneumophila subsp. pneumophila (strain Philadelphia 1 / ATCC 33152 / DSM 7513)).